Here is a 375-residue protein sequence, read N- to C-terminus: Chaperone protein DnaJ (375 aa).

One can recognise a J domain in the interval 5-69 (DYYEILGVSK…QKRAAYDQYG (65 aa)). Residues 130-208 (GVTKEIRIPT…CHGHGRVEKA (79 aa)) form a CR-type zinc finger. 8 residues coordinate Zn(2+): C143, C146, C160, C163, C182, C185, C196, and C199. 4 CXXCXGXG motif repeats span residues 143–150 (CGVCHGSG), 160–167 (CPTCHGQG), 182–189 (CPHCHGRG), and 196–203 (CNSCHGHG).

The protein belongs to the DnaJ family. As to quaternary structure, homodimer. Requires Zn(2+) as cofactor.

Its subcellular location is the cytoplasm. Its function is as follows. Participates actively in the response to hyperosmotic and heat shock by preventing the aggregation of stress-denatured proteins and by disaggregating proteins, also in an autonomous, DnaK-independent fashion. Unfolded proteins bind initially to DnaJ; upon interaction with the DnaJ-bound protein, DnaK hydrolyzes its bound ATP, resulting in the formation of a stable complex. GrpE releases ADP from DnaK; ATP binding to DnaK triggers the release of the substrate protein, thus completing the reaction cycle. Several rounds of ATP-dependent interactions between DnaJ, DnaK and GrpE are required for fully efficient folding. Also involved, together with DnaK and GrpE, in the DNA replication of plasmids through activation of initiation proteins. This is Chaperone protein DnaJ from Serratia proteamaculans (strain 568).